A 639-amino-acid chain; its full sequence is Chaperone protein DnaK (639 aa).

Thr198 carries the post-translational modification Phosphothreonine; by autocatalysis. Low complexity predominate over residues 603 to 618 (AKAQTQGGAQEGAAKQ). Positions 603 to 639 (AKAQTQGGAQEGAAKQSNATADDVVDAEFEEVKDDKK) are disordered. Acidic residues predominate over residues 625–639 (DVVDAEFEEVKDDKK).

Belongs to the heat shock protein 70 family.

In terms of biological role, acts as a chaperone. The protein is Chaperone protein DnaK of Shewanella sp. (strain ANA-3).